The following is a 375-amino-acid chain: Actin-binding Rho-activating protein (375 aa).

Basic and acidic residues-rich tracts occupy residues 1–11 (MAPGEREREAG) and 79–99 (KPDR…SHIK). 2 disordered regions span residues 1-20 (MAPG…LRKV) and 38-99 (NENS…SHIK). Phosphoserine is present on residues Ser150 and Ser182. Over residues 173-182 (QEEPTWKSDS) the composition is skewed to basic and acidic residues. The segment at 173–204 (QEEPTWKSDSVDTEDSGYGGDMEERPEQDAAP) is disordered. Actin-binding regions lie at residues 193 to 293 (DMEE…AERA) and 294 to 375 (KRAE…TLLE). Interaction with actin regions lie at residues 234–279 (SQVD…GDEG) and 346–375 (MRAR…TLLE).

In terms of assembly, binds F-actin and ABLIM1, ABLIM2 and ABLIM3. Interaction with ABLIM2 and ABLIM3 enhances activity. As to expression, expressed specifically in heart and skeletal muscle.

The protein resides in the cytoplasm. It is found in the myofibril. It localises to the sarcomere. The protein localises to the cytoskeleton. Functionally, acts as an activator of serum response factor (SRF)-dependent transcription possibly by inducing nuclear translocation of MKL1 or MKL2 and through a mechanism requiring Rho-actin signaling. This Mus musculus (Mouse) protein is Actin-binding Rho-activating protein.